The following is a 338-amino-acid chain: Glyceraldehyde-3-phosphate dehydrogenase (338 aa).

NAD(+)-binding positions include arginine 12 to isoleucine 13, aspartate 34, and arginine 79. Residues serine 150–threonine 152, threonine 181, threonine 210–glycine 211, and arginine 233 contribute to the D-glyceraldehyde 3-phosphate site. The active-site Nucleophile is the cysteine 151. Asparagine 316 lines the NAD(+) pocket.

Belongs to the glyceraldehyde-3-phosphate dehydrogenase family. Homotetramer.

It localises to the cytoplasm. The catalysed reaction is D-glyceraldehyde 3-phosphate + phosphate + NAD(+) = (2R)-3-phospho-glyceroyl phosphate + NADH + H(+). Its pathway is carbohydrate degradation; glycolysis; pyruvate from D-glyceraldehyde 3-phosphate: step 1/5. This chain is Glyceraldehyde-3-phosphate dehydrogenase (GPD), found in Yarrowia lipolytica (strain CLIB 122 / E 150) (Yeast).